A 122-amino-acid chain; its full sequence is Small ribosomal subunit protein uS13 (122 aa).

Residues 99–122 form a disordered region; it reads RGQRTHTNARTRKGPAKAIAGKKK.

Belongs to the universal ribosomal protein uS13 family. In terms of assembly, part of the 30S ribosomal subunit. Forms a loose heterodimer with protein S19. Forms two bridges to the 50S subunit in the 70S ribosome.

Its function is as follows. Located at the top of the head of the 30S subunit, it contacts several helices of the 16S rRNA. In the 70S ribosome it contacts the 23S rRNA (bridge B1a) and protein L5 of the 50S subunit (bridge B1b), connecting the 2 subunits; these bridges are implicated in subunit movement. Contacts the tRNAs in the A and P-sites. The polypeptide is Small ribosomal subunit protein uS13 (Rhizobium meliloti (strain 1021) (Ensifer meliloti)).